The primary structure comprises 465 residues: ATP synthase subunit beta (465 aa).

Residue 155–162 coordinates ATP; it reads GGAGVGKT.

This sequence belongs to the ATPase alpha/beta chains family. As to quaternary structure, F-type ATPases have 2 components, CF(1) - the catalytic core - and CF(0) - the membrane proton channel. CF(1) has five subunits: alpha(3), beta(3), gamma(1), delta(1), epsilon(1). CF(0) has three main subunits: a(1), b(2) and c(9-12). The alpha and beta chains form an alternating ring which encloses part of the gamma chain. CF(1) is attached to CF(0) by a central stalk formed by the gamma and epsilon chains, while a peripheral stalk is formed by the delta and b chains.

The protein resides in the cell membrane. The enzyme catalyses ATP + H2O + 4 H(+)(in) = ADP + phosphate + 5 H(+)(out). In terms of biological role, produces ATP from ADP in the presence of a proton gradient across the membrane. The catalytic sites are hosted primarily by the beta subunits. The polypeptide is ATP synthase subunit beta (Buchnera aphidicola subsp. Baizongia pistaciae (strain Bp)).